Reading from the N-terminus, the 76-residue chain is Large ribosomal subunit protein eL20 (76 aa).

It belongs to the eukaryotic ribosomal protein eL20 family. As to quaternary structure, part of the 50S ribosomal subunit. Binds 23S rRNA.

This Methanococcus maripaludis (strain C7 / ATCC BAA-1331) protein is Large ribosomal subunit protein eL20.